The chain runs to 522 residues: Anti-sigma-I factor RsgI4 (522 aa).

The Cytoplasmic segment spans residues 1–51 (MNLGVVIKIKRKKAIIVTETGEFKAVNARNGMFLGQKILFDQQDVIENNRN). Positions 2–49 (NLGVVIKIKRKKAIIVTETGEFKAVNARNGMFLGQKILFDQQDVIENN) constitute a RsgI N-terminal anti-sigma domain. Residues 52-72 (GIGLAYSAAIAGMVAVFVFMF) traverse the membrane as a helical segment. Topologically, residues 73-522 (TYFGLHNFNG…SGILKWGREP (450 aa)) are extracellular. A compositionally biased stretch (low complexity) spans 311 to 361 (SAKTPERATTVPVNTPVKPTDAPTKSPATATATATRAPVKATATPAKTLKP). A disordered region spans residues 311 to 371 (SAKTPERATT…SDTPVKTPDG (61 aa)). One can recognise a CBM3 domain in the interval 371–522 (GEQSVKVRFY…SGILKWGREP (152 aa)).

Interacts (via RsgI N-terminal anti-sigma domain) with SigI4.

The protein resides in the cell membrane. Anti-sigma factor for SigI4. Negatively regulates SigI4 activity through direct interaction. Binding of the polysaccharide substrate to the extracellular C-terminal sensing domain of RsgI4 may induce a conformational change in its N-terminal cytoplasmic region, leading to the release and activation of SigI4. This is Anti-sigma-I factor RsgI4 from Acetivibrio thermocellus (strain ATCC 27405 / DSM 1237 / JCM 9322 / NBRC 103400 / NCIMB 10682 / NRRL B-4536 / VPI 7372) (Clostridium thermocellum).